The chain runs to 437 residues: Protein WVD2-like 5 (437 aa).

3 disordered regions span residues M1–A22, T38–K210, and L254–H437. A compositionally biased stretch (low complexity) spans T41–T55. A compositionally biased stretch (basic and acidic residues) spans T58–Q86. Residues S121–F140 are compositionally biased toward polar residues. Positions G151–K167 are enriched in basic and acidic residues. Phosphoserine is present on S208. The span at K288–T297 shows a compositional bias: basic residues. A compositionally biased stretch (low complexity) spans P360–K371. Over residues E408–H437 the composition is skewed to basic and acidic residues. The residue at position 415 (S415) is a Phosphoserine.

Belongs to the TPX2 family. Expressed in seedlings.

Its subcellular location is the cytoplasm. It is found in the cytoskeleton. Functionally, microtubule-associated protein (MAP) that regulates the orientation of interphase cortical microtubules. The sequence is that of Protein WVD2-like 5 from Arabidopsis thaliana (Mouse-ear cress).